The primary structure comprises 269 residues: MSHRQPNRRERGVTRLLPETWRGLTLLLAGVLLLYYLLPIGALVFAQSPASLATDVTNEVVLTAATNSVVAATLSTLVAVAFGVPLAYWLSRTSFRGRDVILALVMLPLVLPPVVSGMLLLRLVGPAGLGQLTSVPLTRSLFGVVLAQTYVASPFLVVTAKTAFDGVDRQLEAAARSLGEDRVGSVRRVTLPLAKQGILAGVTLTFARAIGEFGATLMLAYYPRTLPVQIWVSYLSTGLDAAFPVALVLVGIAVGAILLVHALGTNPWE.

Transmembrane regions (helical) follow at residues 26 to 46 (LLLAGVLLLYYLLPIGALVFA), 69 to 89 (VVAATLSTLVAVAFGVPLAYW), 100 to 120 (VILALVMLPLVLPPVVSGMLL), 140 to 160 (SLFGVVLAQTYVASPFLVVTA), 198 to 218 (ILAGVTLTFARAIGEFGATLM), and 243 to 263 (FPVALVLVGIAVGAILLVHAL). In terms of domain architecture, ABC transmembrane type-1 spans 65–258 (ATNSVVAATL…LVGIAVGAIL (194 aa)).

Belongs to the binding-protein-dependent transport system permease family. In terms of assembly, the complex is composed of two ATP-binding proteins, two transmembrane proteins (HVO_B0370) and a solute-binding protein (HVO_B0369).

It localises to the cell membrane. Functionally, part of an ABC transporter complex involved in molybdenum import. Responsible for the translocation of the substrate across the membrane. In Haloferax volcanii (strain ATCC 29605 / DSM 3757 / JCM 8879 / NBRC 14742 / NCIMB 2012 / VKM B-1768 / DS2) (Halobacterium volcanii), this protein is Probable molybdenum ABC transporter permease protein HVO_B0370.